Reading from the N-terminus, the 353-residue chain is MKFALTGGGTGGHLSIAKALAIELEKQGIEAIYLGSTYGQDREWFENSPLFSERYFFNTQGVVNKSFFKKIGSLFLQAKAAFKAKEILKNHQITHTISVGGFSAGPASFASLLNKIPLYIHEQNAIKGSLNRYLSPKAKAVFSSYAFKDKGNHVLTSYPVQNAFFDCARTRTEIKHILFLGGSQGAKAINEFALLNAPKLTKQGIKITHICGSSAHERMRFFYQELGLLDKVELFAFHNNIIEVMHRADLCVSRAGASSVWELCANGLPTIFIPYPFASNNHQYYNVLEFEKENLCYVVPQNELLPKKLFEVIRKLNQKDDQGNKNLTTISTKLQQKIAKDGAKTIIETILNA.

Residues T10–G12, N124, S183, and Q283 each bind UDP-N-acetyl-alpha-D-glucosamine.

This sequence belongs to the glycosyltransferase 28 family. MurG subfamily.

The protein localises to the cell inner membrane. The enzyme catalyses di-trans,octa-cis-undecaprenyl diphospho-N-acetyl-alpha-D-muramoyl-L-alanyl-D-glutamyl-meso-2,6-diaminopimeloyl-D-alanyl-D-alanine + UDP-N-acetyl-alpha-D-glucosamine = di-trans,octa-cis-undecaprenyl diphospho-[N-acetyl-alpha-D-glucosaminyl-(1-&gt;4)]-N-acetyl-alpha-D-muramoyl-L-alanyl-D-glutamyl-meso-2,6-diaminopimeloyl-D-alanyl-D-alanine + UDP + H(+). Its pathway is cell wall biogenesis; peptidoglycan biosynthesis. Cell wall formation. Catalyzes the transfer of a GlcNAc subunit on undecaprenyl-pyrophosphoryl-MurNAc-pentapeptide (lipid intermediate I) to form undecaprenyl-pyrophosphoryl-MurNAc-(pentapeptide)GlcNAc (lipid intermediate II). The chain is UDP-N-acetylglucosamine--N-acetylmuramyl-(pentapeptide) pyrophosphoryl-undecaprenol N-acetylglucosamine transferase from Helicobacter pylori (strain G27).